The chain runs to 1005 residues: MDGLPKDEAFLWQSSKDNKENGVWSDVQSYGVSNPLWMAVFDYEPTAEEELTLRRGDLVEILSKDSTVSGDEGWWTGKIKDKVGIFPSNYVVSDDKYTTLTGAPKQCPLPLEIEFDELNLDEIIGVGGFGKVYKGLWRDEEVAVKAVRHDPDEDINVTAENVRQEAKIFCMLCHPNIIALTGVCLKPPHLCLVMEYARGGPLHRALAGKKVPAHVLVNWAVQIAKGMTYLHNEAIVPIIHRDLGSSNILILEKAENDDLFNKTLNITDFGLAREWQKTTKMSAAGTYAWMAPEVIRLSLFSKSSDVWSFGVLLWELLTGEVPYREIDALAVAYGVAMNKLTLPIPSTCPEPFVRILEACWDPDPHSRPTFSCILEQLTTIEQSAMFQMPLESFHSLQEDWRLEIQQMFDELRTKEKELRSREEELVRAAEEQRILEDLLKRREQELAEREIDIVERELNIIMYQMYQEKPKVKKRKGNFKKSRLKLKDGNRISLPSGFEHKITVQASPMLDKCKGQGTSSYSPPGSPLIIPRLRAIRLTPVDGSKTWGRSSVLKKEEVTTSNKKKGRTWGPSSTQQKERVGGEERLKTLGEGNKQWSSSAPNLGKSPKHTPISVGFASLTEMEEYADSDGSVPQSPYSQSYLTLPVQSDHRSHPEDTAHAGAPSSDSPKRGSQSRRKSELVLLGCASLLAAVALGSDLSELVPQEEKRKGIFQWAGRGPRRRASSPSRSMSYGEDSVIPSSSVTLISLSSISDCNSTRSLIRSDSDDIGLDHDNVSSGRGVKEDRGQQPNVGSNPLVDYKVESFKRDPKQSLTPTHVTVGRNNTTETRGHRRTPSDGAIRQVTQGHKRSPSDGSTPYQCEPEPSPFPRLPDPHFVFPPPVRRKDTGVERPTSLEFAPRPRPSSNRPRMDPWKFVSLSQTHSSSPSSGGGDACSSGSAEGAQVADVEETLLDMEVEGQRLDSTVPLCGLGLRPTTDPFFKYGNRRVLMKELSISLLQYKVESGVLL.

The SH3 domain maps to 32–96 (VSNPLWMAVF…PSNYVVSDDK (65 aa)). The 263-residue stretch at 118–380 (LNLDEIIGVG…SCILEQLTTI (263 aa)) folds into the Protein kinase domain. ATP is bound by residues 124–132 (IGVGGFGKV) and Lys145. The active-site Proton acceptor is Asp242. Leucine-zipper stretches follow at residues 404-425 (IQQMFDELRTKEKELRSREEEL) and 439-460 (LKRREQELAEREIDIVERELNI). Disordered regions lie at residues 551 to 611 (SVLK…KHTP), 647 to 676 (QSDHRSHPEDTAHAGAPSSDSPKRGSQSRR), 712 to 736 (FQWAGRGPRRRASSPSRSMSYGEDS), and 758 to 940 (RSLI…AEGA). Composition is skewed to basic and acidic residues over residues 576–588 (QKERVGGEERLKT) and 648–658 (SDHRSHPEDTA). 2 stretches are compositionally biased toward basic and acidic residues: residues 761–786 (IRSDSDDIGLDHDNVSSGRGVKEDRG) and 799–809 (YKVESFKRDPK). The span at 810 to 826 (QSLTPTHVTVGRNNTTE) shows a compositional bias: polar residues. Residues 862–879 (EPSPFPRLPDPHFVFPPP) are compositionally biased toward pro residues. Residues 915-940 (SLSQTHSSSPSSGGGDACSSGSAEGA) are compositionally biased toward low complexity.

Belongs to the protein kinase superfamily. STE Ser/Thr protein kinase family. MAP kinase kinase kinase subfamily. As to quaternary structure, homodimer. Binds to the GTPase rac1 but not cdc42 or rhoA. Interacts (via kinase domain) with pak1 (via kinase domain). Interacts with the ubiquitin-conjugating enzyme ube2d4. Requires Mg(2+) as cofactor. Post-translationally, autophosphorylation on serine and threonine residues within the activation loop plays a role in enzyme activation. Mono- and poly-ubiquitinated. In adults, strongly expressed in the brain and spleen with lower levels in pancreas, heart, muscle and kidney (at protein level). In the developing embryo, expressed at stage 22 in the cement gland. Weakly expressed in the pronephros from stage 24 or 25, with expression increasing in strength by stage 30 and continuing at least until stage 37. Expression in the developing pronephros correlates with epithelialization of the proximal pronephric tubules.

It catalyses the reaction L-seryl-[protein] + ATP = O-phospho-L-seryl-[protein] + ADP + H(+). The catalysed reaction is L-threonyl-[protein] + ATP = O-phospho-L-threonyl-[protein] + ADP + H(+). Its activity is regulated as follows. Homodimerization via the leucine zipper domains is required for autophosphorylation and subsequent activation. Activates the JUN N-terminal pathway. Essential for pronephros and cement gland development. In Xenopus laevis (African clawed frog), this protein is Mitogen-activated protein kinase kinase kinase 10 (map3k10).